The sequence spans 306 residues: N(1)-aminopropylagmatine ureohydrolase (306 aa).

Mn(2+)-binding residues include H121, D145, H147, D149, D228, and D230.

The protein belongs to the arginase family. Mn(2+) is required as a cofactor.

The catalysed reaction is N(1)-(3-aminopropyl)agmatine + H2O = urea + spermidine. It participates in amine and polyamine biosynthesis; spermidine biosynthesis. Functionally, ureohydrolase involved in the biosynthesis of spermidine via the carboxyaminopropylagmatine (CAPA) pathway. Catalyzes the conversion of aminopropylagmatine (APA) to spermidine and urea. Is highly specific to APA and incapable of releasing measurable urea from CAPA, agmatine, arginine, guanidine, guanidinobutyrate and guanidinopropionate. The protein is N(1)-aminopropylagmatine ureohydrolase of Synechocystis sp. (strain ATCC 27184 / PCC 6803 / Kazusa).